We begin with the raw amino-acid sequence, 342 residues long: MACEPPTDPGGAAGPLPTSTLGCNILPQGNPPGWGQELHNGQVLTVLRIDNTCAPISFDLGAAEEQLQAWGIQVPAEQYRNLAESALLEPQVRRYIIYNSRPMRLAFAVVFYVLVWANIYSTSQMFALGNQWAGVLLATLAAFSLTLTLVLVFERQQRKANTNTDLRLVAANGALLRHRVLLGVTDTVEGCQSVIQLWFVYFDLENCVQFLSDHVQEMKRSQESLLRSRLSQLCVVMETGVSPVVEGPEDLEDAPLLPSTPGPQERPLTQTELYQLVPEAEPEEMARQLLAVFGGYYTRLLVTSRLPQSMGTRHMDSARIPCPCQLIEVHVLGTGCCPFLAR.

2 consecutive transmembrane segments (helical) span residues Ala106 to Phe126 and Ala133 to Phe153. Residues Val245–Pro267 are disordered.

Interacts with ITGAM; this interaction inhibits ITGAM degradation via the endosome-lysosome pathway. Interacts with ITGB4; this interaction prevents ITGB4 degradation.

Its subcellular location is the cell membrane. In terms of biological role, stabilizes cell surface expression of ITGAM and participates in the adhesion and migration of phagocytes during bacterial clearance. The chain is Transmembrane protein 268 from Mus musculus (Mouse).